The primary structure comprises 531 residues: Galactose/methyl galactoside import permease protein MglC (531 aa).

10 helical membrane-spanning segments follow: residues F193–V213, M239–G259, V267–P287, V300–F320, I326–G346, L376–I396, F424–F444, L461–L481, G483–I503, and T505–V525.

It belongs to the binding-protein-dependent transport system permease family. AraH/RbsC subfamily. The complex is composed of one ATP-binding protein (MglA), two transmembrane proteins (MglC) and a solute-binding protein (MglB).

The protein localises to the cell membrane. Functionally, part of the ABC transporter complex MglABC involved in galactose/methyl galactoside import. Probably responsible for the translocation of the substrate across the membrane. The protein is Galactose/methyl galactoside import permease protein MglC (mglC) of Treponema pallidum (strain Nichols).